The following is a 294-amino-acid chain: MARGPNRRRVDRVPGERRRRLARAMALALPSILALAALGGAATLGWRVGWKSDLLRVREIRFEGLSRATPQELLDLSPVQPGDHLLFLDTDAMAAALRRHPWIASAQVRRTFPPALEVQLAERRPAALVDLGGLYLVDDRGEVFKRAVPGDGLDLPVITGIEREAWAEGRGELAPLLGGALALLGRWSARGLDARSTISEIHVDPEYGTTLWSDEGTEIRLGQGDLEEKLTRLHRVLSALDAEGERAEVLHLDNRRRPDWVAVRVAGRRGEPDGRSSYAAGGGGGPQGRSSSLR.

Over 1 to 26 the chain is Cytoplasmic; the sequence is MARGPNRRRVDRVPGERRRRLARAMA. Residues 27–49 form a helical membrane-spanning segment; that stretch reads LALPSILALAALGGAATLGWRVG. Residues 50–294 are Periplasmic-facing; that stretch reads WKSDLLRVRE…GPQGRSSSLR (245 aa). Positions 55–123 constitute a POTRA domain; it reads LRVREIRFEG…PALEVQLAER (69 aa). Residues 266-294 are disordered; it reads AGRRGEPDGRSSYAAGGGGGPQGRSSSLR.

The protein belongs to the FtsQ/DivIB family. FtsQ subfamily.

The protein resides in the cell inner membrane. Functionally, essential cell division protein. The polypeptide is Cell division protein FtsQ (Anaeromyxobacter sp. (strain K)).